The chain runs to 342 residues: MAEHDYHEDYGLNSFNDSSQEEHQDFLQFRKVFLPCMYLVVFVCGLVGNSLVLVISIFYHKLQSLTDVFLVNLPLADLVFVCTLPFWAYAGIHEWIFGQVMCKTLLGVYTINFYTSMLILTCITVDRFIVVVKATKAYNQQAKRMTWGKVICLLIWVISLLVSLPQIIYGNVFNLDKLICGYHDKEISTVVLATQMTLGFFLPLLAMIVCYSVIIKTLLHAGGFQKHRSLKIIFLVMAVFLLTQTPFNLVKLIRSTHWEYYAMTSFHYTIIVTEAIAYLRACLNPVLYAFVSLKFRKNFWKLVKDIGCLPYLGVSHQWKSSEDNSKTFSASHNVEATSMFQL.

Residues 1-32 (MAEHDYHEDYGLNSFNDSSQEEHQDFLQFRKV) lie on the Extracellular side of the membrane. N-linked (GlcNAc...) asparagine glycosylation occurs at Asn-16. Residues 33-59 (FLPCMYLVVFVCGLVGNSLVLVISIFY) traverse the membrane as a helical segment. Residues 60–68 (HKLQSLTDV) are Cytoplasmic-facing. Residues 69-89 (FLVNLPLADLVFVCTLPFWAY) traverse the membrane as a helical segment. Topologically, residues 90–103 (AGIHEWIFGQVMCK) are extracellular. Residues Cys-102 and Cys-180 are joined by a disulfide bond. The chain crosses the membrane as a helical span at residues 104–125 (TLLGVYTINFYTSMLILTCITV). At 126–143 (DRFIVVVKATKAYNQQAK) the chain is on the cytoplasmic side. Residues 144–164 (RMTWGKVICLLIWVISLLVSL) form a helical membrane-spanning segment. The Extracellular segment spans residues 165–187 (PQIIYGNVFNLDKLICGYHDKEI). A helical membrane pass occupies residues 188–215 (STVVLATQMTLGFFLPLLAMIVCYSVII). Residues 216-231 (KTLLHAGGFQKHRSLK) are Cytoplasmic-facing. Residues 232 to 259 (IIFLVMAVFLLTQTPFNLVKLIRSTHWE) form a helical membrane-spanning segment. The Extracellular portion of the chain corresponds to 260 to 275 (YYAMTSFHYTIIVTEA). Residues 276–293 (IAYLRACLNPVLYAFVSL) form a helical membrane-spanning segment. Over 294 to 342 (KFRKNFWKLVKDIGCLPYLGVSHQWKSSEDNSKTFSASHNVEATSMFQL) the chain is Cytoplasmic.

It belongs to the G-protein coupled receptor 1 family.

The protein localises to the cell membrane. Its function is as follows. Receptor for the C-X-C chemokine CXCL16. Used as a coreceptor by SIVs and by strains of HIV-2 and m-tropic HIV-1. This is C-X-C chemokine receptor type 6 (CXCR6) from Macaca nemestrina (Pig-tailed macaque).